The sequence spans 266 residues: Dihydropteroate synthase (266 aa).

In terms of domain architecture, Pterin-binding spans 12–260 (AAIMGILNVT…DVKANQDIVA (249 aa)). Asn19 provides a ligand contact to Mg(2+). (7,8-dihydropterin-6-yl)methyl diphosphate-binding positions include Thr59, Asp93, Asn112, Asp176, Lys212, and 248 to 250 (RVH).

Belongs to the DHPS family. Homodimer or homotrimer. Mg(2+) is required as a cofactor.

The enzyme catalyses (7,8-dihydropterin-6-yl)methyl diphosphate + 4-aminobenzoate = 7,8-dihydropteroate + diphosphate. The protein operates within cofactor biosynthesis; tetrahydrofolate biosynthesis; 7,8-dihydrofolate from 2-amino-4-hydroxy-6-hydroxymethyl-7,8-dihydropteridine diphosphate and 4-aminobenzoate: step 1/2. In terms of biological role, catalyzes the condensation of para-aminobenzoate (pABA) with 6-hydroxymethyl-7,8-dihydropterin diphosphate (DHPt-PP) to form 7,8-dihydropteroate (H2Pte), the immediate precursor of folate derivatives. The protein is Dihydropteroate synthase (folP) of Streptococcus pyogenes serotype M1.